The primary structure comprises 459 residues: Cysteine--tRNA ligase (459 aa).

Residue Cys28 participates in Zn(2+) binding. The short motif at 30–40 (ITIYDYCHIGH) is the 'HIGH' region element. The Zn(2+) site is built by Cys209, His234, and Glu238. Positions 266–270 (KMSKS) match the 'KMSKS' region motif. ATP is bound at residue Lys269.

Belongs to the class-I aminoacyl-tRNA synthetase family. In terms of assembly, monomer. It depends on Zn(2+) as a cofactor.

It is found in the cytoplasm. It catalyses the reaction tRNA(Cys) + L-cysteine + ATP = L-cysteinyl-tRNA(Cys) + AMP + diphosphate. This Pseudoalteromonas translucida (strain TAC 125) protein is Cysteine--tRNA ligase.